A 380-amino-acid polypeptide reads, in one-letter code: ATPase ASNA1 homolog (380 aa).

48–55 (KGGVGKTT) provides a ligand contact to ATP. Aspartate 77 is an active-site residue. ATP contacts are provided by glutamate 248 and asparagine 275.

Belongs to the arsA ATPase family. As to quaternary structure, homodimer.

The protein resides in the cytoplasm. The protein localises to the endoplasmic reticulum. Its function is as follows. ATPase required for the post-translational delivery of tail-anchored (TA) proteins to the endoplasmic reticulum. Recognizes and selectively binds the transmembrane domain of TA proteins in the cytosol. This complex then targets to the endoplasmic reticulum by membrane-bound receptors, where the tail-anchored protein is released for insertion. This process is regulated by ATP binding and hydrolysis. ATP binding drives the homodimer towards the closed dimer state, facilitating recognition of newly synthesized TA membrane proteins. ATP hydrolysis is required for insertion. Subsequently, the homodimer reverts towards the open dimer state, lowering its affinity for the membrane-bound receptor, and returning it to the cytosol to initiate a new round of targeting. This chain is ATPase ASNA1 homolog, found in Plasmodium yoelii yoelii.